Reading from the N-terminus, the 261-residue chain is Ribonuclease 3 (261 aa).

The region spanning Tyr20–Gly144 is the RNase III domain. Mg(2+) is bound at residue Glu62. The active site involves Asp66. Residues Asn130 and Glu133 each coordinate Mg(2+). Glu133 is a catalytic residue. Residues Asn172–Thr241 enclose the DRBM domain.

The protein belongs to the ribonuclease III family. As to quaternary structure, homodimer. It depends on Mg(2+) as a cofactor.

The protein resides in the cytoplasm. It carries out the reaction Endonucleolytic cleavage to 5'-phosphomonoester.. Functionally, digests double-stranded RNA. Involved in the processing of primary rRNA transcript to yield the immediate precursors to the large and small rRNAs (23S and 16S). Processes some mRNAs, and tRNAs when they are encoded in the rRNA operon. Processes pre-crRNA and tracrRNA of type II CRISPR loci if present in the organism. In Azobacteroides pseudotrichonymphae genomovar. CFP2, this protein is Ribonuclease 3.